The chain runs to 88 residues: UPF0297 protein SAK_2030 (88 aa).

This sequence belongs to the UPF0297 family.

The polypeptide is UPF0297 protein SAK_2030 (Streptococcus agalactiae serotype Ia (strain ATCC 27591 / A909 / CDC SS700)).